We begin with the raw amino-acid sequence, 392 residues long: [Phe13]-bombesin receptor (392 aa).

Over 1–40 the chain is Extracellular; the sequence is MPEGFQSLNQTLPSAISSIAHLESLNDSFILGAKQSEDVS. 2 N-linked (GlcNAc...) asparagine glycosylation sites follow: Asn-9 and Asn-26. Residues 41–62 form a helical membrane-spanning segment; the sequence is PGLEILALISVTYAVIISVGIL. Residues 63–81 are Cytoplasmic-facing; that stretch reads GNTILIKVFFKIKSMQTVP. A helical membrane pass occupies residues 82–102; sequence NIFITSLAFGDLLLLLTCVPV. At 103–120 the chain is on the extracellular side; that stretch reads DASRYIVDTWMFGRAGCK. Cys-119 and Cys-202 are oxidised to a cystine. Residues 121–142 form a helical membrane-spanning segment; it reads IISFIQLTSVGVSVFTLTVLSA. Residues 143–162 lie on the Cytoplasmic side of the membrane; the sequence is DRYRAIVKPLQLQTSDAVLK. The helical transmembrane segment at 163-183 threads the bilayer; it reads TCGKAVCVWIISMLLAAPEAV. The Extracellular portion of the chain corresponds to 184 to 219; that stretch reads FSDLYEFGSSEKNTTFEACAPYPVSEKILQETHSLI. A helical membrane pass occupies residues 220–240; it reads CFLVFYIVPLSIISAYYFLIA. Over 241–271 the chain is Cytoplasmic; it reads KTLYKSTFNMPAEEHTHARKQIESRKRVAKT. Residues 272-292 traverse the membrane as a helical segment; the sequence is VLVLVALFAVCWLPNHMLYLY. Over 293 to 312 the chain is Extracellular; it reads RSFTYHSAVNSSAFHLSATI. The helical transmembrane segment at 313–332 threads the bilayer; that stretch reads FARVLAFSNSCVNPFALYWL. Residues 333–392 lie on the Cytoplasmic side of the membrane; the sequence is SRSFRQHFKKQVYCCKTEPPASQQSPTHSSTITGITAVKGNIQMSEISITLLSAYDVKKE. Residue Cys-346 is the site of S-palmitoyl cysteine attachment.

It belongs to the G-protein coupled receptor 1 family. In terms of tissue distribution, expressed only in brain, primarily in cortex and forebrain and at low levels in the midbrain.

It is found in the cell membrane. Functionally, the relative rank potency of bombesin-like peptides for this receptor is [Phe13]bombesin &gt; [Leu13]bombesin &gt; GRP &gt; neuromedin-B. This is [Phe13]-bombesin receptor (BB4) from Bombina orientalis (Oriental fire-bellied toad).